The sequence spans 280 residues: UPF0758 protein Atu1607 (280 aa).

Residues 1–22 form a disordered region; sequence MAKRPALPSADLSPTSGFEAGE. In terms of domain architecture, MPN spans 158–280; it reads VLGSWSSVID…HASFKGLRLI (123 aa). Positions 229, 231, and 242 each coordinate Zn(2+). The short motif at 229 to 242 is the JAMM motif element; that stretch reads HNHPSGDPTPSRAD.

The protein belongs to the UPF0758 family.

This chain is UPF0758 protein Atu1607, found in Agrobacterium fabrum (strain C58 / ATCC 33970) (Agrobacterium tumefaciens (strain C58)).